A 287-amino-acid polypeptide reads, in one-letter code: Shikimate dehydrogenase (NADP(+)) (287 aa).

Residues 18-20 and threonine 66 each bind shikimate; that span reads SYS. Lysine 70 serves as the catalytic Proton acceptor. Position 82 (glutamate 82) interacts with NADP(+). Positions 91 and 106 each coordinate shikimate. Residues 130–134 and methionine 228 contribute to the NADP(+) site; that span reads GSGGA. Tyrosine 230 lines the shikimate pocket. Residue glycine 251 coordinates NADP(+).

Belongs to the shikimate dehydrogenase family. As to quaternary structure, homodimer.

The catalysed reaction is shikimate + NADP(+) = 3-dehydroshikimate + NADPH + H(+). Its pathway is metabolic intermediate biosynthesis; chorismate biosynthesis; chorismate from D-erythrose 4-phosphate and phosphoenolpyruvate: step 4/7. In terms of biological role, involved in the biosynthesis of the chorismate, which leads to the biosynthesis of aromatic amino acids. Catalyzes the reversible NADPH linked reduction of 3-dehydroshikimate (DHSA) to yield shikimate (SA). The chain is Shikimate dehydrogenase (NADP(+)) from Chlorobium chlorochromatii (strain CaD3).